The following is a 469-amino-acid chain: Threonine synthase (469 aa).

Lys112 is subject to N6-(pyridoxal phosphate)lysine.

The protein belongs to the threonine synthase family. Pyridoxal 5'-phosphate serves as cofactor.

The enzyme catalyses O-phospho-L-homoserine + H2O = L-threonine + phosphate. It participates in amino-acid biosynthesis; L-threonine biosynthesis; L-threonine from L-aspartate: step 5/5. Functionally, catalyzes the gamma-elimination of phosphate from L-phosphohomoserine and the beta-addition of water to produce L-threonine. In Pseudomonas aeruginosa (strain ATCC 15692 / DSM 22644 / CIP 104116 / JCM 14847 / LMG 12228 / 1C / PRS 101 / PAO1), this protein is Threonine synthase (thrC).